Reading from the N-terminus, the 272-residue chain is Elongation factor Ts (272 aa).

The interval 76–79 is involved in Mg(2+) ion dislocation from EF-Tu; it reads TDFV.

It belongs to the EF-Ts family.

It is found in the cytoplasm. Its function is as follows. Associates with the EF-Tu.GDP complex and induces the exchange of GDP to GTP. It remains bound to the aminoacyl-tRNA.EF-Tu.GTP complex up to the GTP hydrolysis stage on the ribosome. The polypeptide is Elongation factor Ts (Corynebacterium urealyticum (strain ATCC 43042 / DSM 7109)).